The sequence spans 471 residues: MTDLPDSTRWQLWIVAFGFFMQSLDTTIVNTALPSMAQSLGESPLHMHMVIVSYVLTVAVMLPASGWLADKVGVRNIFFTAIVLFTLGSLFCALSATLNELLLARALQGVGGAMMVPVGRLTVMKIVPREQYMAAMTFVTLPGQVGPLLGPALGGLLVEYASWHWIFLINIPVGIIGAIATLMLMPNYTMQTRRFDLSGFLLLAVGMAVLTLALDGSKGTGLSPLAIAGLAAIGVVALVLYLLHARNNNRALFSLKLFRTRTFSLGLAGSFAGRIGSGMLPFMTPVFLQIGLGFSPFHAGLMMIPMVLGSMGMKRIVVQVVNRFGYRRVLVATTLGLSLVTLLFMTTALLGWYYVLPFVLFLQGMVNSTRFSSMNTLTLKDLPDNLASSGNSLLSMIMQLSMSIGVTIAGLLLGLFGSQHVSVDSSTTQTVFMYTWLSMALIIALPAFIFARVPNDTHQNVAISRRKRSAQ.

At 1–11 the chain is on the periplasmic side; that stretch reads MTDLPDSTRWQ. Residues 12–32 form a helical membrane-spanning segment; the sequence is LWIVAFGFFMQSLDTTIVNTA. The Cytoplasmic segment spans residues 33-48; the sequence is LPSMAQSLGESPLHMH. The helical transmembrane segment at 49 to 69 threads the bilayer; sequence MVIVSYVLTVAVMLPASGWLA. Residues 70–76 are Periplasmic-facing; sequence DKVGVRN. The chain crosses the membrane as a helical span at residues 77-97; sequence IFFTAIVLFTLGSLFCALSAT. At 98–101 the chain is on the cytoplasmic side; the sequence is LNEL. The helical transmembrane segment at 102–124 threads the bilayer; that stretch reads LLARALQGVGGAMMVPVGRLTVM. Topologically, residues 125–137 are periplasmic; it reads KIVPREQYMAAMT. A helical transmembrane segment spans residues 138-158; sequence FVTLPGQVGPLLGPALGGLLV. At 159–164 the chain is on the cytoplasmic side; it reads EYASWH. A helical membrane pass occupies residues 165–185; it reads WIFLINIPVGIIGAIATLMLM. Over 186–196 the chain is Periplasmic; the sequence is PNYTMQTRRFD. The chain crosses the membrane as a helical span at residues 197–217; that stretch reads LSGFLLLAVGMAVLTLALDGS. Residues 218–224 lie on the Cytoplasmic side of the membrane; the sequence is KGTGLSP. The chain crosses the membrane as a helical span at residues 225–245; the sequence is LAIAGLAAIGVVALVLYLLHA. At 246–262 the chain is on the periplasmic side; it reads RNNNRALFSLKLFRTRT. The chain crosses the membrane as a helical span at residues 263–283; the sequence is FSLGLAGSFAGRIGSGMLPFM. At 284–285 the chain is on the cytoplasmic side; it reads TP. A helical transmembrane segment spans residues 286-306; the sequence is VFLQIGLGFSPFHAGLMMIPM. Over 307–341 the chain is Periplasmic; that stretch reads VLGSMGMKRIVVQVVNRFGYRRVLVATTLGLSLVT. A helical transmembrane segment spans residues 342–362; the sequence is LLFMTTALLGWYYVLPFVLFL. At 363 to 395 the chain is on the cytoplasmic side; that stretch reads QGMVNSTRFSSMNTLTLKDLPDNLASSGNSLLS. The chain crosses the membrane as a helical span at residues 396–416; the sequence is MIMQLSMSIGVTIAGLLLGLF. Residues 417-430 lie on the Periplasmic side of the membrane; it reads GSQHVSVDSSTTQT. A helical transmembrane segment spans residues 431–451; sequence VFMYTWLSMALIIALPAFIFA. Residues 452–471 lie on the Cytoplasmic side of the membrane; it reads RVPNDTHQNVAISRRKRSAQ.

It belongs to the major facilitator superfamily. TCR/Tet family.

It is found in the cell inner membrane. The chain is Putative multidrug resistance protein MdtD from Escherichia fergusonii (strain ATCC 35469 / DSM 13698 / CCUG 18766 / IAM 14443 / JCM 21226 / LMG 7866 / NBRC 102419 / NCTC 12128 / CDC 0568-73).